Reading from the N-terminus, the 238-residue chain is Uridylate kinase (238 aa).

12-15 contacts ATP; that stretch reads KLSG. Gly54 contributes to the UMP binding site. ATP is bound by residues Gly55 and Arg59. Residues Asp74 and 135 to 142 contribute to the UMP site; that span reads TGNPFFTT. ATP-binding residues include Thr162, Tyr168, and Asp171.

Belongs to the UMP kinase family. Homohexamer.

The protein resides in the cytoplasm. The catalysed reaction is UMP + ATP = UDP + ADP. It functions in the pathway pyrimidine metabolism; CTP biosynthesis via de novo pathway; UDP from UMP (UMPK route): step 1/1. Inhibited by UTP. In terms of biological role, catalyzes the reversible phosphorylation of UMP to UDP. The sequence is that of Uridylate kinase from Bordetella parapertussis (strain 12822 / ATCC BAA-587 / NCTC 13253).